A 430-amino-acid polypeptide reads, in one-letter code: Immunoglobulin heavy constant delta (430 aa).

Over 1–406 (APTKAPDVFP…FDDVGSLWTT (406 aa)) the chain is Extracellular. Residues 6 to 98 (PDVFPIISGC…TASKSKKEIF (93 aa)) enclose the Ig-like 1 domain. Residues C28 and C84 are joined by a disulfide bond. Residues 96–167 (EIFRWPESPK…TPECPSHTQP (72 aa)) are disordered. A compositionally biased stretch (polar residues) spans 106–118 (AQASSVPTAQPQA). 2 O-linked (GalNAc...) serine glycosylation sites follow: S109 and S110. Residues T113, T126, T127, T131, and T132 are each glycosylated (O-linked (GalNAc...) threonine). The span at 138–158 (GGEEKKKEKEKEEQEERETKT) shows a compositional bias: basic and acidic residues. 2 consecutive Ig-like domains span residues 175–263 (PAVQ…RLMA) and 267–373 (PAAQ…RSLE). 2 cysteine pairs are disulfide-bonded: C190-C249 and C294-C355. N225, N316, and N367 each carry an N-linked (GlcNAc...) asparagine glycan. A helical transmembrane segment spans residues 407-427 (LSTFVALFILTLLYSGIVTFI). Residues 428–430 (KVK) are Cytoplasmic-facing.

As to quaternary structure, immunoglobulins are composed of two identical heavy chains and two identical light chains; disulfide-linked. An IgD molecule contains thus a delta heavy chain combined with either a kappa or a lambda light chains. Kappa light chains are found predominantly on the membrane IgD (mIgD) form and lambda on the secreted IgD (sIgD) form, this fact is poorly understood. Membrane-bound IgD molecules are non-covalently associated with a heterodimer of CD79A and CD79B.

The protein resides in the secreted. Its subcellular location is the cell membrane. In terms of biological role, constant region of immunoglobulin heavy chains. Immunoglobulins, also known as antibodies, are membrane-bound or secreted glycoproteins produced by B lymphocytes. In the recognition phase of humoral immunity, the membrane-bound immunoglobulins serve as receptors which, upon binding of a specific antigen, trigger the clonal expansion and differentiation of B lymphocytes into immunoglobulins-secreting plasma cells. Secreted immunoglobulins mediate the effector phase of humoral immunity, which results in the elimination of bound antigens. The antigen binding site is formed by the variable domain of one heavy chain, together with that of its associated light chain. Thus, each immunoglobulin has two antigen binding sites with remarkable affinity for a particular antigen. The variable domains are assembled by a process called V-(D)-J rearrangement and can then be subjected to somatic hypermutations which, after exposure to antigen and selection, allow affinity maturation for a particular antigen. IgD is the major antigen receptor isotype on the surface of most peripheral B-cells, where it is coexpressed with IgM. The membrane-bound IgD (mIgD) induces the phosphorylation of CD79A and CD79B by the Src family of protein tyrosine kinases. Soluble IgD (sIgD) concentration in serum below those of IgG, IgA, and IgM but much higher than that of IgE. IgM and IgD molecules present on B cells have identical V regions and antigen-binding sites. After the antigen binds to the B-cell receptor, the secreted form sIgD is shut off. IgD is a potent inducer of TNF, IL1B, and IL1RN. IgD also induces release of IL6, IL10, and LIF from peripheral blood mononuclear cells. Monocytes seem to be the main producers of cytokines in vitro in the presence of IgD. In Homo sapiens (Human), this protein is Immunoglobulin heavy constant delta.